Consider the following 633-residue polypeptide: MFQLLRRAHGLCMPSSLYFSRLVNRSLLSKSPTLAKIVHAQLLEAGFVRTTYWGNRCLQLYFKSGSVINALQLFDDIPDKNTITWNVCLKGLFKNGYLNNALDLFDEMPERDVVSWNTMISGLVSCGFHEYGIRVFFDMQRWEIRPTEFTFSILASLVTCVRHGEQIHGNAICSGVSRYNLVVWNSVMDMYRRLGVFDYALSVFLTMEDRDVVSWNCLILSCSDSGNKEVALDQFWLMREMEIQPDEYTVSMVVSICSDLRELSKGKQALALCIKMGFLSNSIVLGAGIDMFSKCNRLDDSVKLFRELEKWDSVLCNSMIGSYSWHCCGEDALRLFILAMTQSVRPDKFTFSSVLSSMNAVMLDHGADVHSLVIKLGFDLDTAVATSLMEMYFKTGSVDLAMGVFAKTDGKDLIFWNTVIMGLARNSRAVESLAIFNQLLMNQSLKPDRVTLMGILVACCYAGFVNEGIQIFSSMEKAHGVNPGNEHYACIIELLCRVGMINEAKDIADKIPFEPSSHIWEPILCASLDLGDTRLAETVAKTMLESEPKSSFPYLVLIKIYEMTWRWENSVKLRYAMNEHKLKSAQGSSKISIESSVFSFEADQLQIHGGHDTCALLDLLSWDSFDQKIHWSA.

A mitochondrion-targeting transit peptide spans 1–30 (MFQLLRRAHGLCMPSSLYFSRLVNRSLLSK). PPR repeat units follow at residues 50–80 (TTYW…IPDK), 81–111 (NTIT…MPER), 112–146 (DVVS…EIRP), 147–178 (TEFT…GVSR), 180–210 (NLVV…MEDR), 211–245 (DVVS…EIQP), 246–280 (DEYT…GFLS), 281–311 (NSIV…LEKW), 312–346 (DSVL…SVRP), 347–380 (DKFT…GFDL), 381–411 (DTAV…TDGK), 412–447 (DLIF…SLKP), 448–483 (DRVT…GVNP), and 484–514 (GNEH…IPFE). The segment at 519 to 594 (IWEPILCASL…AQGSSKISIE (76 aa)) is type E motif.

Belongs to the PPR family. PCMP-E subfamily.

The protein localises to the mitochondrion. The sequence is that of Pentatricopeptide repeat-containing protein At1g43980, mitochondrial (PCMP-E58) from Arabidopsis thaliana (Mouse-ear cress).